A 437-amino-acid polypeptide reads, in one-letter code: GTPase Obg (437 aa).

Residues 2 to 160 form the Obg domain; the sequence is SMFLDTAKIS…RQLELELKIL (159 aa). Residues 161-338 enclose the OBG-type G domain; it reads ADVGLVGFPS…LLEATAELLA (178 aa). GTP-binding positions include 167 to 174, 192 to 196, 214 to 217, 284 to 287, and 319 to 321; these read GFPSVGKS, FTTIV, DLPG, NKMD, and SSL. Mg(2+)-binding residues include Ser174 and Thr194. Residues 359–437 enclose the OCT domain; that stretch reads GFAEAEKDFE…IGKFEFEFVD (79 aa).

Belongs to the TRAFAC class OBG-HflX-like GTPase superfamily. OBG GTPase family. Monomer. Requires Mg(2+) as cofactor.

The protein resides in the cytoplasm. Its function is as follows. An essential GTPase which binds GTP, GDP and possibly (p)ppGpp with moderate affinity, with high nucleotide exchange rates and a fairly low GTP hydrolysis rate. Plays a role in control of the cell cycle, stress response, ribosome biogenesis and in those bacteria that undergo differentiation, in morphogenesis control. This is GTPase Obg from Streptococcus pyogenes serotype M18 (strain MGAS8232).